The primary structure comprises 401 residues: E3 ubiquitin-protein ligase NHLRC1 (401 aa).

An RING-type zinc finger spans residues 28–74 (CKVCFERFGHWQQRRPRNLPCGHVVCLACVAALAHPRTLGLECPFCR). NHL repeat units lie at residues 115–159 (TLTC…FDSG), 163–206 (AHQF…FDFF), 207–247 (GQIK…LEAD), 250–303 (EGVL…FNST), 304–352 (MQLI…LGKP), and 353–396 (EEFP…FKVM).

As to quaternary structure, interacts with AGL. Interacts (via the NHL repeats) with EPM2A/laforin. Forms a complex with EPM2A/laforin and HSP70. Interacts with PRDM8.

Its subcellular location is the endoplasmic reticulum. The protein localises to the nucleus. It catalyses the reaction S-ubiquitinyl-[E2 ubiquitin-conjugating enzyme]-L-cysteine + [acceptor protein]-L-lysine = [E2 ubiquitin-conjugating enzyme]-L-cysteine + N(6)-ubiquitinyl-[acceptor protein]-L-lysine.. It functions in the pathway protein modification; protein ubiquitination. In terms of biological role, E3 ubiquitin-protein ligase. Together with the phosphatase EPM2A/laforin, appears to be involved in the clearance of toxic polyglucosan and protein aggregates via multiple pathways. In complex with EPM2A/laforin and HSP70, suppresses the cellular toxicity of misfolded proteins by promoting their degradation through the ubiquitin-proteasome system (UPS). Ubiquitinates the glycogen-targeting protein phosphatase subunits PPP1R3C/PTG and PPP1R3D in a laforin-dependent manner and targets them for proteasome-dependent degradation, thus decreasing glycogen accumulation. Polyubiquitinates EPM2A/laforin and ubiquitinates AGL and targets them for proteasome-dependent degradation. Also promotes proteasome-independent protein degradation through the macroautophagy pathway. The sequence is that of E3 ubiquitin-protein ligase NHLRC1 (Nhlrc1) from Mus musculus (Mouse).